A 302-amino-acid polypeptide reads, in one-letter code: Glutaminase (302 aa).

The substrate site is built by Ser-61, Asn-111, Glu-155, Asn-162, Tyr-186, Tyr-238, and Val-256.

Belongs to the glutaminase family. In terms of assembly, homotetramer.

The catalysed reaction is L-glutamine + H2O = L-glutamate + NH4(+). This is Glutaminase from Pseudomonas aeruginosa (strain ATCC 15692 / DSM 22644 / CIP 104116 / JCM 14847 / LMG 12228 / 1C / PRS 101 / PAO1).